A 642-amino-acid polypeptide reads, in one-letter code: 1-deoxy-D-xylulose-5-phosphate synthase (642 aa).

Thiamine diphosphate is bound by residues H79 and 120–122 (AHS). D155 serves as a coordination point for Mg(2+). Residues 156–157 (GS), N184, Y293, and E375 each bind thiamine diphosphate. N184 serves as a coordination point for Mg(2+).

The protein belongs to the transketolase family. DXPS subfamily. In terms of assembly, homodimer. The cofactor is Mg(2+). Requires thiamine diphosphate as cofactor.

It catalyses the reaction D-glyceraldehyde 3-phosphate + pyruvate + H(+) = 1-deoxy-D-xylulose 5-phosphate + CO2. It functions in the pathway metabolic intermediate biosynthesis; 1-deoxy-D-xylulose 5-phosphate biosynthesis; 1-deoxy-D-xylulose 5-phosphate from D-glyceraldehyde 3-phosphate and pyruvate: step 1/1. Its function is as follows. Catalyzes the acyloin condensation reaction between C atoms 2 and 3 of pyruvate and glyceraldehyde 3-phosphate to yield 1-deoxy-D-xylulose-5-phosphate (DXP). The protein is 1-deoxy-D-xylulose-5-phosphate synthase of Ruegeria pomeroyi (strain ATCC 700808 / DSM 15171 / DSS-3) (Silicibacter pomeroyi).